Reading from the N-terminus, the 614-residue chain is Vitamin B12 transporter BtuB (614 aa).

The first 20 residues, 1–20, serve as a signal peptide directing secretion; sequence MIKKASLLTACSVTAFSAWA. The TonB box motif lies at 26-33; that stretch reads DTLVVTAN. Positions 38–152 constitute a TBDR plug domain; the sequence is PRSTVLAPTT…IGGVVNIITT (115 aa). Residues Leu83, Ser85, Asn92, and 110–111 contribute to the cyanocob(III)alamin site; that span reads VS. Residues 155 to 614 enclose the TBDR beta-barrel domain; that stretch reads HPGTEISAGW…EYTLSGSYTF (460 aa). The next 3 beta stranded transmembrane spans lie at 158–165, 169–178, and 184–195; these read TEISAGWG, YQNYDVSTQQ, and TRVTLLGDYAHT. The Ca(2+) site is built by Asp199, Gln211, Asp213, and Asp215. 2 beta stranded membrane passes run 217–227 and 232–248; these read FLSKTLYGALE and DVWSGFVRGYGYDNRTN. Positions 249 and 250 each coordinate Ca(2+). Ala251 provides a ligand contact to cyanocob(III)alamin. Asp261 is a Ca(2+) binding site. Transmembrane regions (beta stranded) follow at residues 263–277, 279–296, 309–325, 328–337, 353–369, 371–381, 385–400, 403–417, 434–443, 449–458, 473–490, 494–509, 517–529, and 535–550; these read RKLYSQSWDAGLRYN, ELIKSQLITSYSHSKDYN, TLDEMKQYTVQWANNII, HGNIGAGVDW, YDQRNTGIYLTGLQQVG, FTFEGAGRSDD, FGRHGTWQTSAGWEFI, YRFIASYGTSYKAPN, KSKQWEGAFE, VNWRISGYRN, YYNEGKARIKGVEATANF, PLTHTVSYDYVDARNA, RRAKQQVKYQLDW, and DWGITYQYLGTRYDKD. Residue Thr309 participates in cyanocob(III)alamin binding. A cyanocob(III)alamin-binding site is contributed by Arg517. Position 551 (Tyr551) interacts with cyanocob(III)alamin. 3 beta stranded membrane passes run 558 to 572, 585 to 596, and 602 to 614; these read TVKMGGVSLWDLAVA, IANLFDKDYETV, and AGREYTLSGSYTF. The short motif at 597–614 is the TonB C-terminal box element; sequence YGYQTAGREYTLSGSYTF.

Belongs to the TonB-dependent receptor family. BtuB (TC 1.B.14.3.1) subfamily.

Its subcellular location is the cell outer membrane. Involved in the active translocation of vitamin B12 (cyanocobalamin) across the outer membrane to the periplasmic space. It derives its energy for transport by interacting with the trans-periplasmic membrane protein TonB. The protein is Vitamin B12 transporter BtuB of Escherichia coli O6:K15:H31 (strain 536 / UPEC).